We begin with the raw amino-acid sequence, 860 residues long: Transforming growth factor-beta receptor-associated protein 1 (860 aa).

The CNH domain occupies 24–297 (HISIECVECC…HILQDFEGRV (274 aa)). Residues 564 to 732 (RPLDEQQQTS…YLRAGPSAQD (169 aa)) form a CHCR repeat.

The protein belongs to the TRAP1 family. Interacts with TGFBR2 and ACVR2B; in the absence of ligand stimulation. Interacts with TGFBR1, ACVRL1, BMPR1A and ACVR1B; in the absence of ligand stimulation and to a less extent. Interacts with SMAD4; the interaction seems to be mutually exclusive with the interaction of SMAD4 and phosphorylated SMAD2. May interact with ALOX5. Interacts with RAB5C. Interacts with VPS8, VPS11 and VPS16. Component of the putative class C core vacuole/endosome tethering (CORVET) complex; the core of which composed of the class C Vps proteins VPS11, VPS16, VPS18 and VPS33A, is associated with VPS8 and TGFBRAP1.

The protein localises to the cytoplasm. Its subcellular location is the early endosome. Functionally, plays a role in the TGF-beta/activin signaling pathway. It associates with inactive heteromeric TGF-beta and activin receptor complexes, mainly through the type II receptor, and is released upon activation of signaling. May recruit SMAD4 to the vicinity of the receptor complex and facilitate its interaction with receptor-regulated Smads, such as SMAD2. Its function is as follows. Plays a role in vesicle-mediated protein trafficking of the endocytic membrane transport pathway. Believed to act as a component of the putative CORVET endosomal tethering complexes which is proposed to be involved in the Rab5-to-Rab7 endosome conversion probably implicating MON1A/B, and via binding SNAREs and SNARE complexes to mediate tethering and docking events during SNARE-mediated membrane fusion. The CORVET complex is proposed to function as a Rab5 effector to mediate early endosome fusion probably in specific endosome subpopulations. Functions predominantly in APPL1-containing endosomes and in degradative but not recycling trafficking of endocytosed cargo. The protein is Transforming growth factor-beta receptor-associated protein 1 (Tgfbrap1) of Mus musculus (Mouse).